Consider the following 246-residue polypeptide: Probable septum site-determining protein MinC (246 aa).

Residues 116-140 (AAVSPPPPPPARAEPAPPAARPAPG) are disordered. Over residues 119 to 136 (SPPPPPPARAEPAPPAAR) the composition is skewed to pro residues.

This sequence belongs to the MinC family. In terms of assembly, interacts with MinD and FtsZ.

Functionally, cell division inhibitor that blocks the formation of polar Z ring septums. Rapidly oscillates between the poles of the cell to destabilize FtsZ filaments that have formed before they mature into polar Z rings. Prevents FtsZ polymerization. The chain is Probable septum site-determining protein MinC from Xanthomonas oryzae pv. oryzae (strain MAFF 311018).